The chain runs to 128 residues: Probable 4-amino-4-deoxy-L-arabinose-phosphoundecaprenol flippase subunit ArnF (128 aa).

Residues 1-2 (MG) lie on the Cytoplasmic side of the membrane. A helical membrane pass occupies residues 3–23 (LIWGLFSVIIASVAQLSLGFA). At 24 to 35 (ASHLPPMTHLWD) the chain is on the periplasmic side. The helical transmembrane segment at 36-56 (FIAALLAFGLDARILLLGLLG) threads the bilayer. Topologically, residues 57–76 (YLLSVFCWYKTLHKLALSKA) are cytoplasmic. A helical membrane pass occupies residues 77–97 (YALLSMSYVLVWIASMVLPGW). The Periplasmic portion of the chain corresponds to 98-100 (EGT). Residues 101–121 (FSLKALLGVACIMSGLMLIFL) traverse the membrane as a helical segment. Residues 122–128 (PMTKQRY) lie on the Cytoplasmic side of the membrane.

It belongs to the ArnF family. As to quaternary structure, heterodimer of ArnE and ArnF.

The protein localises to the cell inner membrane. Its pathway is bacterial outer membrane biogenesis; lipopolysaccharide biosynthesis. In terms of biological role, translocates 4-amino-4-deoxy-L-arabinose-phosphoundecaprenol (alpha-L-Ara4N-phosphoundecaprenol) from the cytoplasmic to the periplasmic side of the inner membrane. The sequence is that of Probable 4-amino-4-deoxy-L-arabinose-phosphoundecaprenol flippase subunit ArnF from Escherichia coli O9:H4 (strain HS).